The primary structure comprises 289 residues: MYB transcription factor 69 (289 aa).

HTH myb-type domains lie at 9–61 (KAGV…TNYL) and 62–116 (RPGI…KKKL). 2 DNA-binding regions (H-T-H motif) span residues 37 to 61 (WRAV…TNYL) and 89 to 112 (WAAI…NTHL). Disordered regions lie at residues 127 to 162 (APPR…ADST) and 225 to 252 (SSAI…QQQQ). Over residues 139–154 (ADCRRHDMTRSSKDSH) the composition is skewed to basic and acidic residues.

As to expression, mainly expressed in highly lignified tissues such as vascular tissues.

Its subcellular location is the nucleus. Transcription factor that binds to the promoter of MYB31 and MYB42 and activates directly their expression, thus repressing lignin biosynthesis. In Zea mays (Maize), this protein is MYB transcription factor 69.